A 247-amino-acid polypeptide reads, in one-letter code: MSHRDTLFSAPIARLGDWTFDERVAEVFPDMIQRSVPGYSNIISMIGMLAERFVQPGTQVYDLGCSLGAATLSVRRNIHHDNCKIIAIDNSPAMIERCSRHIDAYKAPTPVDVIEGDIRDIAIENASMVVLNFTLQFLEPSERQALLDKIYQGLNPGGALVLSEKFSFEDAKVGELLFNMHHDFKRANGYSELEISQKRSMLENVMLTDSVETHKARLHKAGFEHSELWFQCFNFGSLVALKAEDAA.

Residues Y39, 64–66 (GCS), 89–90 (DN), 117–118 (DI), N132, and R199 contribute to the S-adenosyl-L-methionine site.

It belongs to the class I-like SAM-binding methyltransferase superfamily. Cx-SAM synthase family. Homodimer.

The enzyme catalyses prephenate + S-adenosyl-L-methionine = carboxy-S-adenosyl-L-methionine + 3-phenylpyruvate + H2O. Its function is as follows. Catalyzes the conversion of S-adenosyl-L-methionine (SAM) to carboxy-S-adenosyl-L-methionine (Cx-SAM). This chain is Carboxy-S-adenosyl-L-methionine synthase, found in Shigella sonnei (strain Ss046).